The sequence spans 261 residues: Thiamine thiazole synthase (261 aa).

NAD(+) is bound by residues serine 40, 59–60, glycine 67, valine 133, and 159–161; these read ER and HVD. Positions 161 and 176 each coordinate Fe cation. Residues serine 179 and methionine 226 each contribute to the NAD(+) site. Arginine 236 is a binding site for glycine.

This sequence belongs to the THI4 family. As to quaternary structure, homooctamer; tetramer of dimers. Fe(2+) serves as cofactor.

The catalysed reaction is hydrogen sulfide + glycine + NAD(+) = ADP-5-ethyl-4-methylthiazole-2-carboxylate + nicotinamide + 3 H2O + H(+). Its pathway is cofactor biosynthesis; thiamine diphosphate biosynthesis. Functionally, involved in the biosynthesis of the thiazole moiety of thiamine. Catalyzes the conversion of NAD and glycine to adenosine diphosphate 5-(2-hydroxyethyl)-4-methylthiazole-2-carboxylate (ADT), an adenylated thiazole intermediate, using free sulfide as a source of sulfur. This is Thiamine thiazole synthase from Methanococcus vannielii (strain ATCC 35089 / DSM 1224 / JCM 13029 / OCM 148 / SB).